Consider the following 298-residue polypeptide: Homoserine kinase (298 aa).

Residue 83 to 93 (PISRGLGSSSS) participates in ATP binding.

It belongs to the GHMP kinase family. Homoserine kinase subfamily.

Its subcellular location is the cytoplasm. The catalysed reaction is L-homoserine + ATP = O-phospho-L-homoserine + ADP + H(+). Its pathway is amino-acid biosynthesis; L-threonine biosynthesis; L-threonine from L-aspartate: step 4/5. Functionally, catalyzes the ATP-dependent phosphorylation of L-homoserine to L-homoserine phosphate. The protein is Homoserine kinase of Clostridium botulinum (strain Eklund 17B / Type B).